A 145-amino-acid chain; its full sequence is Lysozyme C (145 aa).

The first 19 residues, 1–19 (MLFFGFLLAFLSAVPGTEG), serve as a signal peptide directing secretion. One can recognise a C-type lysozyme domain in the interval 20–145 (EIIPRCELVK…RDLSSYVKGC (126 aa)). 4 cysteine pairs are disulfide-bonded: Cys25-Cys145, Cys49-Cys133, Cys82-Cys98, and Cys94-Cys112. Catalysis depends on residues Glu54 and Asp70.

Belongs to the glycosyl hydrolase 22 family. In terms of assembly, monomer.

Its subcellular location is the secreted. The catalysed reaction is Hydrolysis of (1-&gt;4)-beta-linkages between N-acetylmuramic acid and N-acetyl-D-glucosamine residues in a peptidoglycan and between N-acetyl-D-glucosamine residues in chitodextrins.. In terms of biological role, lysozymes have primarily a bacteriolytic function; those in tissues and body fluids are associated with the monocyte-macrophage system and enhance the activity of immunoagents. The chain is Lysozyme C (LYZ) from Opisthocomus hoazin (Hoatzin).